The sequence spans 333 residues: Probable G-protein coupled receptor 33 (333 aa).

Topologically, residues 1-30 (MDLINSTDYLINASTLVRNSTQFLAPASKM) are extracellular. 3 N-linked (GlcNAc...) asparagine glycosylation sites follow: N5, N12, and N19. Residues 31-53 (IIALSLYISSIIGTITNGLYLWV) traverse the membrane as a helical segment. Topologically, residues 54–64 (LRFKMKQTVNT) are cytoplasmic. The chain crosses the membrane as a helical span at residues 65 to 86 (LLFFHLILSYFISTMILPFMAT). Over 87–103 (SQLQDNHWNFGTALCKV) the chain is Extracellular. C101 and C179 form a disulfide bridge. The chain crosses the membrane as a helical span at residues 104–124 (FNGTLSLGMFTSVFFLSAIGL). The Cytoplasmic portion of the chain corresponds to 125 to 143 (DRYLLTLHPVWSQQHRTPR). Residues 144 to 165 (WASSIVLGVWISAAALSIPYLI) form a helical membrane-spanning segment. The Extracellular segment spans residues 166–209 (FRQTHHDRKGKVTCQNNYAVSTNWESKEMQALRQWIHVACFISR). The chain crosses the membrane as a helical span at residues 210–230 (FLLGFLLPFFIIIFCYERVAS). Topologically, residues 231-246 (KVKERSLFKSSKPFKV) are cytoplasmic. Residues 247 to 268 (MMTAIISFFVCWMPYHIHQGLL) form a helical membrane-spanning segment. The Extracellular portion of the chain corresponds to 269 to 283 (LTMNQSLLLELTLIL). A glycan (N-linked (GlcNAc...) asparagine) is linked at N272. The chain crosses the membrane as a helical span at residues 284 to 303 (TVLTTSFNTIFSPTLYLFVG). The Cytoplasmic segment spans residues 304-333 (ENFKKVFKKSILALFESTFSEDSSVERTQT).

Belongs to the G-protein coupled receptor 1 family.

The protein localises to the cell membrane. Its function is as follows. Orphan receptor; could be a chemoattractant receptor. The sequence is that of Probable G-protein coupled receptor 33 (GPR33) from Pan paniscus (Pygmy chimpanzee).